We begin with the raw amino-acid sequence, 187 residues long: Prepilin peptidase-dependent protein B (187 aa).

Positions 1-7 (MPVKEQG) are cleaved as a propeptide — leader sequence. N-methylphenylalanine is present on Phe8. The helical transmembrane segment at 8-28 (FSLLEVLIAMAISSVLLLGAA) threads the bilayer.

It localises to the membrane. Its function is as follows. Not yet known. The chain is Prepilin peptidase-dependent protein B (ppdB) from Escherichia coli (strain K12).